Here is a 931-residue protein sequence, read N- to C-terminus: Adhesion G protein-coupled receptor E1 (931 aa).

Residues 1–27 (MWGFWLLLFWGFSGMYRWGMTTLPTLG) form the signal peptide. Residues 28–644 (QTLGGVNECQ…IMASGELTME (617 aa)) lie on the Extracellular side of the membrane. EGF-like domains follow at residues 32 to 80 (GVNE…VECQ) and 81 to 132 (DVNE…FLCA). 21 cysteine pairs are disulfide-bonded: C36/C48, C42/C57, C59/C79, C85/C98, C92/C107, C109/C131, C137/C149, C143/C158, C160/C171, C177/C189, C183/C198, C200/C220, C226/C239, C233/C248, C250/C270, C276/C286, C280/C295, C297/C317, C323/C336, C330/C345, and C347/C366. In terms of domain architecture, EGF-like 3; calcium-binding spans 133–172 (DVDECLTIGICPKYSNCSNSVGSYSCTCQPGFVLNGSICE). N-linked (GlcNAc...) asparagine glycosylation is found at N148 and N167. The EGF-like 4; calcium-binding domain occupies 173 to 221 (DEDECVTRDVCPEHATCHNTLGSYYCTCNSGLESSGGGPMFQGLDESCE). In terms of domain architecture, EGF-like 5; calcium-binding spans 222–271 (DVDECSRNSTLCGPTFICINTLGSYSCSCPAGFSLPTFQILGHPADGNCT). A glycan (N-linked (GlcNAc...) asparagine) is linked at N229. 2 N-linked (GlcNAc...) asparagine glycosylation sites follow: N269 and N283. An EGF-like 6; calcium-binding domain is found at 272–318 (DIDECDDTCPLNSSCTNTIGSYFCTCHPGFASSNGQLNFKDLEVTCE). The 49-residue stretch at 319-367 (DIDECTQDPLQCGLNSVCTNVPGSYICGCLPDFQMDPEGSQGYGNFNCK) folds into the EGF-like 7; calcium-binding domain. N-linked (GlcNAc...) asparagine glycans are attached at residues N405, N417, N474, and N498. Residues 482–642 (EYLDIESKVI…AIIMASGELT (161 aa)) form the GAIN-B domain. A Cell attachment site motif is present at residues 506–508 (RGD). 2 disulfides stabilise this stretch: C595–C624 and C612–C626. The segment at 595–642 (CVSWNTDVEDGRWTPSGCEIVEASETHTVCSCNRMANLAIIMASGELT) is GPS. Residues 645–672 (FSLYIISHVGTVISLVCLALAIATFLLC) form a helical membrane-spanning segment. Residues 673 to 679 (RAVQNHN) are Cytoplasmic-facing. Residues 680-701 (TYMHLHLCVCLFLAKILFLTGI) form a helical membrane-spanning segment. Residues 702 to 711 (DKTDNQTACA) lie on the Extracellular side of the membrane. An N-linked (GlcNAc...) asparagine glycan is attached at N706. The chain crosses the membrane as a helical span at residues 712–735 (IIAGFLHYLFLACFFWMLVEAVML). The Cytoplasmic portion of the chain corresponds to 736-754 (FLMVRNLKVVNYFSSRNIK). A helical transmembrane segment spans residues 755-776 (MLHLCAFGYGLPVLVVIISASV). The Extracellular portion of the chain corresponds to 777 to 792 (QPRGYGMHNRCWLNTE). A helical membrane pass occupies residues 793 to 821 (TGFIWSFLGPVCMIITINSVLLAWTLWVL). At 822 to 839 (RQKLCSVSSEVSKLKDTR) the chain is on the cytoplasmic side. A helical transmembrane segment spans residues 840 to 859 (LLTFKAIAQIFILGCSWVLG). At 860-874 (IFQIGPLASIMAYLF) the chain is on the extracellular side. The helical transmembrane segment at 875–897 (TIINSLQGAFIFLIHCLLNRQVR) threads the bilayer. Topologically, residues 898–931 (DEYKKLLTRKTDLSSHSQTSGILLSSMPSTSKMG) are cytoplasmic.

This sequence belongs to the G-protein coupled receptor 2 family. Adhesion G-protein coupled receptor (ADGR) subfamily. As to expression, in macrophages; but absent from those which are localized within T-cell areas of lymph nodes and spleen. Low level of expression on blood monocytes.

The protein localises to the cell membrane. In terms of biological role, orphan receptor involved in cell adhesion and probably in cell-cell interactions specifically involving cells of the immune system. May play a role in regulatory T-cells (Treg) development. In Mus musculus (Mouse), this protein is Adhesion G protein-coupled receptor E1 (Adgre1).